Reading from the N-terminus, the 476-residue chain is Eukaryotic translation initiation factor 3 subunit L (476 aa).

Positions 257–452 constitute a PCI domain; sequence DAIRMFSHIL…DLDYALENDL (196 aa).

The protein belongs to the eIF-3 subunit L family. In terms of assembly, component of the eukaryotic translation initiation factor 3 (eIF-3) complex.

The protein localises to the cytoplasm. In terms of biological role, component of the eukaryotic translation initiation factor 3 (eIF-3) complex, which is involved in protein synthesis of a specialized repertoire of mRNAs and, together with other initiation factors, stimulates binding of mRNA and methionyl-tRNAi to the 40S ribosome. The eIF-3 complex specifically targets and initiates translation of a subset of mRNAs involved in cell proliferation. The chain is Eukaryotic translation initiation factor 3 subunit L from Aspergillus oryzae (strain ATCC 42149 / RIB 40) (Yellow koji mold).